Consider the following 68-residue polypeptide: Large ribosomal subunit protein bL32 (68 aa).

Residues 1 to 25 (MAVPQNKITKSRRGQRRSHDALVAG) form a disordered region.

It belongs to the bacterial ribosomal protein bL32 family.

This Dinoroseobacter shibae (strain DSM 16493 / NCIMB 14021 / DFL 12) protein is Large ribosomal subunit protein bL32.